A 152-amino-acid chain; its full sequence is Large ribosomal subunit protein bL9 (152 aa).

It belongs to the bacterial ribosomal protein bL9 family.

In terms of biological role, binds to the 23S rRNA. This chain is Large ribosomal subunit protein bL9, found in Rippkaea orientalis (strain PCC 8801 / RF-1) (Cyanothece sp. (strain PCC 8801)).